A 213-amino-acid polypeptide reads, in one-letter code: Thiamine-phosphate synthase (213 aa).

Residues 40–44 (QFREK) and Asn75 each bind 4-amino-2-methyl-5-(diphosphooxymethyl)pyrimidine. Mg(2+) contacts are provided by Asp76 and Asp95. Ser113 provides a ligand contact to 4-amino-2-methyl-5-(diphosphooxymethyl)pyrimidine. 139-141 (TPS) serves as a coordination point for 2-[(2R,5Z)-2-carboxy-4-methylthiazol-5(2H)-ylidene]ethyl phosphate. Lys142 contributes to the 4-amino-2-methyl-5-(diphosphooxymethyl)pyrimidine binding site. 2-[(2R,5Z)-2-carboxy-4-methylthiazol-5(2H)-ylidene]ethyl phosphate is bound by residues Gly171 and 191 to 192 (IS).

It belongs to the thiamine-phosphate synthase family. Requires Mg(2+) as cofactor.

The catalysed reaction is 2-[(2R,5Z)-2-carboxy-4-methylthiazol-5(2H)-ylidene]ethyl phosphate + 4-amino-2-methyl-5-(diphosphooxymethyl)pyrimidine + 2 H(+) = thiamine phosphate + CO2 + diphosphate. It catalyses the reaction 2-(2-carboxy-4-methylthiazol-5-yl)ethyl phosphate + 4-amino-2-methyl-5-(diphosphooxymethyl)pyrimidine + 2 H(+) = thiamine phosphate + CO2 + diphosphate. It carries out the reaction 4-methyl-5-(2-phosphooxyethyl)-thiazole + 4-amino-2-methyl-5-(diphosphooxymethyl)pyrimidine + H(+) = thiamine phosphate + diphosphate. The protein operates within cofactor biosynthesis; thiamine diphosphate biosynthesis; thiamine phosphate from 4-amino-2-methyl-5-diphosphomethylpyrimidine and 4-methyl-5-(2-phosphoethyl)-thiazole: step 1/1. Condenses 4-methyl-5-(beta-hydroxyethyl)thiazole monophosphate (THZ-P) and 2-methyl-4-amino-5-hydroxymethyl pyrimidine pyrophosphate (HMP-PP) to form thiamine monophosphate (TMP). This Staphylococcus aureus (strain bovine RF122 / ET3-1) protein is Thiamine-phosphate synthase.